The primary structure comprises 226 residues: PKHD-type hydroxylase PputW619_4316 (226 aa).

Positions 78–178 (KVFPPLINCY…RYAAFFWTQS (101 aa)) constitute a Fe2OG dioxygenase domain. 3 residues coordinate Fe cation: His96, Asp98, and His159. Arg169 provides a ligand contact to 2-oxoglutarate.

Requires Fe(2+) as cofactor. The cofactor is L-ascorbate.

The protein is PKHD-type hydroxylase PputW619_4316 of Pseudomonas putida (strain W619).